The sequence spans 128 residues: Large ribosomal subunit protein bL17 (128 aa).

The protein belongs to the bacterial ribosomal protein bL17 family. Part of the 50S ribosomal subunit. Contacts protein L32.

The chain is Large ribosomal subunit protein bL17 from Ehrlichia ruminantium (strain Gardel).